We begin with the raw amino-acid sequence, 88 residues long: Small ribosomal subunit protein bS18 (88 aa).

This sequence belongs to the bacterial ribosomal protein bS18 family. In terms of assembly, part of the 30S ribosomal subunit. Forms a tight heterodimer with protein bS6.

Binds as a heterodimer with protein bS6 to the central domain of the 16S rRNA, where it helps stabilize the platform of the 30S subunit. This is Small ribosomal subunit protein bS18 from Aliarcobacter butzleri (strain RM4018) (Arcobacter butzleri).